A 129-amino-acid polypeptide reads, in one-letter code: Large ribosomal subunit protein bL12 (129 aa).

This sequence belongs to the bacterial ribosomal protein bL12 family. As to quaternary structure, homodimer. Part of the ribosomal stalk of the 50S ribosomal subunit. Forms a multimeric L10(L12)X complex, where L10 forms an elongated spine to which 2 to 4 L12 dimers bind in a sequential fashion. Binds GTP-bound translation factors.

Forms part of the ribosomal stalk which helps the ribosome interact with GTP-bound translation factors. Is thus essential for accurate translation. This Thermosipho melanesiensis (strain DSM 12029 / CIP 104789 / BI429) protein is Large ribosomal subunit protein bL12.